A 142-amino-acid chain; its full sequence is Large ribosomal subunit protein uL11 (142 aa).

Belongs to the universal ribosomal protein uL11 family. Part of the ribosomal stalk of the 50S ribosomal subunit. Interacts with L10 and the large rRNA to form the base of the stalk. L10 forms an elongated spine to which L12 dimers bind in a sequential fashion forming a multimeric L10(L12)X complex. In terms of processing, one or more lysine residues are methylated.

Functionally, forms part of the ribosomal stalk which helps the ribosome interact with GTP-bound translation factors. The chain is Large ribosomal subunit protein uL11 from Xanthomonas campestris pv. campestris (strain 8004).